Consider the following 144-residue polypeptide: NADH-ubiquinone oxidoreductase chain 6 (144 aa).

5 helical membrane-spanning segments follow: residues 1-21 (MLGSFFFLAIISCVMSYINVD), 26-46 (SFFLIFSLLMVMPLISFFLHV), 47-67 (WFSYFICLLFLSGIFVILVYF), 76-96 (VVTPFYFVGGVLSVFFFYPFF), and 108-128 (FYFSVYWMLLVWVIFVLIFFM).

This sequence belongs to the complex I subunit 6 family.

It is found in the mitochondrion membrane. The enzyme catalyses a ubiquinone + NADH + 5 H(+)(in) = a ubiquinol + NAD(+) + 4 H(+)(out). Functionally, core subunit of the mitochondrial membrane respiratory chain NADH dehydrogenase (Complex I) that is believed to belong to the minimal assembly required for catalysis. Complex I functions in the transfer of electrons from NADH to the respiratory chain. The immediate electron acceptor for the enzyme is believed to be ubiquinone. In Ascaris suum (Pig roundworm), this protein is NADH-ubiquinone oxidoreductase chain 6 (ND6).